Here is an 879-residue protein sequence, read N- to C-terminus: Phosphoinositide 3-kinase regulatory subunit 5 (879 aa).

The tract at residues 23–100 (SGSTDISSNW…APYIPETSDL (78 aa)) is heterodimerization. Disordered stretches follow at residues 314-345 (SLED…PKQD) and 570-590 (SSST…PSPS). A compositionally biased stretch (acidic residues) spans 315-336 (LEDDVTEEDEEVDFEEVDDKDE). Over residues 570-589 (SSSTNAPMTNAESPLKSPSP) the composition is skewed to polar residues. Positions 651–751 (PILADMVLYY…WSNGEKVCTS (101 aa)) are interaction with beta-gamma G protein dimers.

As to quaternary structure, heterodimer. Interacts with a catalytic subunit and with beta-gamma G protein dimers.

Its subcellular location is the nucleus. The protein resides in the cytoplasm. The protein localises to the cell membrane. With respect to regulation, greatly activated by G gamma proteins. Functionally, regulatory subunit of the PI3K gamma complex. Required for recruitment of the catalytic subunit to the plasma membrane via interaction with beta-gamma G protein dimers. Required for G protein-mediated activation of PIK3CG. In Xenopus laevis (African clawed frog), this protein is Phosphoinositide 3-kinase regulatory subunit 5 (pik3r5).